The following is a 286-amino-acid chain: MRATWRGSVTVGLVSFPVRLTPVRQERGVRLHQVHRVDGGRVRHRRVCELCGEELEAADLARGHDSGAGVVLVEDEELAGLRALPSRAVEVVQFSPAGQVDPVLLGRAYYLEPEEPGTGSYSVLREVLERGGLVGIARVPLRGREVVAVVRPRGGVLVLQVLVWAEEVREPDFVVPVAVSGERELGLAASLVGAMTEDFDPAAFPDAYSAGLTRVVADKLAGQRLERQERQRREAGEVRQADETDEAAETEVPEVDIPASRAPGETGGELLAALRRSLERLRGGRR.

Residues 10–175 (TVGLVSFPVR…EEVREPDFVV (166 aa)) enclose the Ku domain. The span at 226 to 242 (ERQERQRREAGEVRQAD) shows a compositional bias: basic and acidic residues. The disordered stretch occupies residues 226–270 (ERQERQRREAGEVRQADETDEAAETEVPEVDIPASRAPGETGGEL). Acidic residues predominate over residues 243-254 (ETDEAAETEVPE).

It belongs to the prokaryotic Ku family. Homodimer. Interacts with LigD.

In terms of biological role, with LigD forms a non-homologous end joining (NHEJ) DNA repair enzyme, which repairs dsDNA breaks with reduced fidelity. Binds linear dsDNA with 5'- and 3'- overhangs but not closed circular dsDNA nor ssDNA. Recruits and stimulates the ligase activity of LigD. This is Non-homologous end joining protein Ku from Actinosynnema mirum (strain ATCC 29888 / DSM 43827 / JCM 3225 / NBRC 14064 / NCIMB 13271 / NRRL B-12336 / IMRU 3971 / 101).